The following is a 485-amino-acid chain: E3 ubiquitin-protein ligase TRIM34B (485 aa).

The RING-type zinc-finger motif lies at 15–58 (CPVCQELLTKALSLGCGHLVCQACLISNKNAVINPRGKSSCPVC). The segment at 91 to 127 (TKRDLCVHHGEKLLLFCKEDKKVICWVCERSQEHRGH) adopts a B box-type zinc-finger fold. Residues Cys-96, His-99, Cys-118, and His-124 each coordinate Zn(2+). The stretch at 136–170 (VRECQENLQKALTRLRKEQEKVETLEADIKEDRLS) forms a coiled coil. The B30.2/SPRY domain occupies 282 to 485 (LSGMLQKFRE…APMTLCPLNS (204 aa)).

This sequence belongs to the TRIM/RBCC family. As to quaternary structure, homotrimer. Interacts (via B-box and SPRY domain) with TRIM5.

The protein localises to the cytoplasm. Its subcellular location is the mitochondrion. It catalyses the reaction S-ubiquitinyl-[E2 ubiquitin-conjugating enzyme]-L-cysteine + [acceptor protein]-L-lysine = [E2 ubiquitin-conjugating enzyme]-L-cysteine + N(6)-ubiquitinyl-[acceptor protein]-L-lysine.. Its pathway is protein modification; protein ubiquitination. Functions as antiviral protein and contributes to the defense against retroviral infections. Acts as a capsid-specific restriction factor with the help of TRIM5 and prevents infection from non-host-adapted retroviruses. During influenza A virus infection, promotes programmed cell death by targeting ZBP1 for 'Lys-63'-linked polyubiquitination. In turn, promotes ZBP1 recruitment of RIPK3 to mediate virus-induced programmed necrosis. Negatively regulates the function of mitochondria by enhancing mitochondrial depolarization leading to cytochrome c release and mitochondria-dependent apoptosis. Also promotes the formation of multinucleated giant cells by means of cell fusion and phagocytosis in epithelial cells. Regulates intestinal inflammation by controlling the exocytosis of the major component of colonic mucus MUC2 from colonic goblet cells. The sequence is that of E3 ubiquitin-protein ligase TRIM34B from Mus musculus (Mouse).